Consider the following 226-residue polypeptide: Type-5 uracil-DNA glycosylase (226 aa).

[4Fe-4S] cluster contacts are provided by C23, C26, C125, and C140.

It belongs to the uracil-DNA glycosylase (UDG) superfamily. Type 5 (UDGb) family.

In terms of biological role, DNA glycosylase with broad substrate specificity. Can remove uracil from double-stranded DNA containing either a U/G or U/A base pair. Can also process hydroxymethyluracil (mispaired with guanine or adenine), hypoxanthine and fluorouracil. Exhibits a clear preference for double-stranded DNA substrates, but can also process uracil in single-stranded DNA, with lower efficiency. In Pyrobaculum aerophilum (strain ATCC 51768 / DSM 7523 / JCM 9630 / CIP 104966 / NBRC 100827 / IM2), this protein is Type-5 uracil-DNA glycosylase.